A 371-amino-acid polypeptide reads, in one-letter code: Protein SOMBRERO (371 aa).

The region spanning 17 to 166 (VPPGFRFHPT…GWVVCRVFKK (150 aa)) is the NAC domain. A DNA-binding region spans residues 118 to 172 (IGLRKTLVFYTGRAPHGQKTEWIMHEYRLDDSENEIQEDGWVVCRVFKKKNHFRG). Disordered regions lie at residues 176-213 (EQEQ…LILH) and 316-355 (VQNH…NQRF). The span at 192–201 (NDHDHHHHID) shows a compositional bias: basic and acidic residues. Low complexity-rich tracts occupy residues 202-213 (SNSNNHSPLILH) and 340-349 (GNNNGGSSSS).

In terms of tissue distribution, accumulates in maturing root cap cells, in both COL and LRC cells.

It localises to the nucleus. In terms of biological role, transcription regulator. Together with BRN1 and BRN2, regulates cellular maturation of root cap. Represses stem cell-like divisions in the root cap daughter cells, and thus promotes daughter cell fate. Inhibits expression of its positive regulator FEZ in a feedback loop for controlled switches in cell division plane. Promotes the expression of genes involved in secondary cell walls (SCW) biosynthesis. This chain is Protein SOMBRERO (SMB), found in Arabidopsis thaliana (Mouse-ear cress).